Here is a 182-residue protein sequence, read N- to C-terminus: Endoribonuclease YbeY (182 aa).

Zn(2+) is bound by residues His-120, His-124, and His-130. The segment at 157–182 (RGVSFAPKPTGAGAFPSAADRDDTQN) is disordered.

It belongs to the endoribonuclease YbeY family. Requires Zn(2+) as cofactor.

It localises to the cytoplasm. In terms of biological role, single strand-specific metallo-endoribonuclease involved in late-stage 70S ribosome quality control and in maturation of the 3' terminus of the 16S rRNA. The chain is Endoribonuclease YbeY from Corynebacterium jeikeium (strain K411).